The sequence spans 621 residues: Phosphoenolpyruvate carboxykinase [GTP] (621 aa).

Substrate-binding positions include R83 and 217–219 (YGG). The Mn(2+) site is built by K226 and H245. Residue S267 coordinates substrate. Residue 268-273 (MCGKTS) participates in GTP binding. Residue C269 is part of the active site. Mn(2+) is bound at residue D286. 381–383 (NAR) is a substrate binding site. Positions 383 and 415 each coordinate GTP.

The protein belongs to the phosphoenolpyruvate carboxykinase [GTP] family. Requires Mn(2+) as cofactor.

Its subcellular location is the cytoplasm. It carries out the reaction oxaloacetate + GTP = phosphoenolpyruvate + GDP + CO2. It participates in carbohydrate biosynthesis; gluconeogenesis. Catalyzes the conversion of oxaloacetate (OAA) to phosphoenolpyruvate (PEP), the rate-limiting step in the metabolic pathway that produces glucose from lactate and other precursors derived from the citric acid cycle. The protein is Phosphoenolpyruvate carboxykinase [GTP] of Pyrococcus horikoshii (strain ATCC 700860 / DSM 12428 / JCM 9974 / NBRC 100139 / OT-3).